Here is a 1206-residue protein sequence, read N- to C-terminus: uncharacterized protein (1206 aa).

Disordered regions lie at residues 133 to 547, 568 to 837, and 859 to 1206; these read YDLD…PVDY, FASS…DQLL, and RQRA…KATS. Pro residues-rich tracts occupy residues 139-151 and 159-234; these read IPPPPPGPAPGPP and GESP…PPAP. S255 is modified (phosphoserine). The span at 305–319 shows a compositional bias: low complexity; it reads VRTSSIPVQEAPGAS. Positions 351–363 are enriched in basic and acidic residues; it reads RALEPEQPREPRP. Residues 384–413 are compositionally biased toward pro residues; the sequence is APPPAPPLPPPAPPLPPPAPSLPPAAPPLP. Residues 414-436 show a composition bias toward low complexity; it reads STELAAPPSSGFMKTSKSNSPAL. Residues 454-467 show a composition bias toward basic and acidic residues; sequence VDWRDPRQMEKLRS. Over residues 522 to 531 the composition is skewed to low complexity; that stretch reads PEKSPSSSSL. Basic and acidic residues predominate over residues 568 to 577; the sequence is FASSAEKEAK. The segment covering 656–671 has biased composition (low complexity); the sequence is LPKATPGLTLPLKPTP. Position 680 is a phosphothreonine (T680). The segment covering 732–747 has biased composition (basic and acidic residues); it reads AEKDLASVRQREKPET. The span at 1001-1016 shows a compositional bias: pro residues; the sequence is IPPPPEFSNDPEPPAP. Positions 1028–1041 are enriched in polar residues; the sequence is PRNNFSDLGQSWGP. R1051, R1083, and R1094 each carry omega-N-methylarginine. The span at 1170–1184 shows a compositional bias: polar residues; sequence PHGNTHYGSPINTFT.

This is an uncharacterized protein from Mus musculus (Mouse).